Reading from the N-terminus, the 255-residue chain is Indole-3-glycerol phosphate synthase (255 aa).

It belongs to the TrpC family.

It catalyses the reaction 1-(2-carboxyphenylamino)-1-deoxy-D-ribulose 5-phosphate + H(+) = (1S,2R)-1-C-(indol-3-yl)glycerol 3-phosphate + CO2 + H2O. The protein operates within amino-acid biosynthesis; L-tryptophan biosynthesis; L-tryptophan from chorismate: step 4/5. This chain is Indole-3-glycerol phosphate synthase, found in Streptococcus pneumoniae (strain Hungary19A-6).